The chain runs to 504 residues: Pre-mRNA-processing factor 19 (504 aa).

N-acetylserine is present on S2. Residues 2–73 (SLICSISNEV…KPPSATSIPA (72 aa)) form the U-box domain. The may mediate interaction with PSMC5 stretch occupies residues 68–223 (ATSIPAILKA…VGLHSASIPG (156 aa)). 4 positions are modified to N6-acetyllysine: K122, K179, K244, and K261. A WD 1 repeat occupies 219–259 (ASIPGILALDLCPSDTNKILTGGADKNVVVFDKSSEQILAT). WD repeat units follow at residues 262–301 (GHTK…CVQV), 304–345 (AHES…TKVT), 348–387 (TSGC…NVAN), 390–429 (GHSG…NFKT), 433–472 (DNNF…LHFT), and 473–503 (EHSG…KFYS).

The protein belongs to the WD repeat PRP19 family. As to quaternary structure, homotetramer. Component of activated, catalytic and post-catalytic spliceosomes. Component of the Prp19 complex/PRP19C/Nineteen complex/NTC and related complexes described as PRP19-CDC5L splicing complex and PSO4 complex. A homotetramer of PRPF19, CDC5L, PLRG1 and BCAS2 constitute the core of those complexes. The interaction with CDC5L, PLRG1 and BCAS2 is direct within this core complex. At least three less stably associated proteins CTNNBL1, CWC15 and HSPA8 are found in the Prp19 complex. The Prp19 complex associates with the spliceosome during its assembly and remodeling recruiting additional proteins. Component of the XAB2 complex, a multimeric protein complex composed of XAB2, PRPF19, AQR, ZNF830, ISY1, and PPIE. Interacts with CWC22 and EIF4A3 in an RNA-independent manner. Interacts with RPA1 and RPA2; the PRP19-CDC5L complex is recruited to the sites of DNA repair where it interacts with the replication protein A complex (RPA). Interacts with SETMAR; required for SETMAR recruitment to site of DNA damage. Interacts with U2AF2; the interaction is direct and recruits the Prp19 complex to RNA polymerase II C-terminal domain (CTD) and the pre-mRNA. Interacts with PRPF3. Interacts with APEX1, DNTT and PSMB4. Interacts with PSMC5. Interacts with KNSTRN. Interacts (via N-terminus) with CDC5L. Interacts with KHDC4. Interacts with USB1. Interacts with DDX41. As to expression, ubiquitous. Weakly expressed in senescent cells of different tissue origins. Highly expressed in tumor cell lines.

The protein resides in the nucleus. It localises to the nucleoplasm. It is found in the cytoplasm. The protein localises to the cytoskeleton. Its subcellular location is the spindle. The protein resides in the lipid droplet. The catalysed reaction is S-ubiquitinyl-[E2 ubiquitin-conjugating enzyme]-L-cysteine + [acceptor protein]-L-lysine = [E2 ubiquitin-conjugating enzyme]-L-cysteine + N(6)-ubiquitinyl-[acceptor protein]-L-lysine.. The protein operates within protein modification; protein ubiquitination. Ubiquitin-protein ligase which is a core component of several complexes mainly involved pre-mRNA splicing and DNA repair. Required for pre-mRNA splicing as component of the spliceosome. Core component of the PRP19C/Prp19 complex/NTC/Nineteen complex which is part of the spliceosome and participates in its assembly, its remodeling and is required for its activity. During assembly of the spliceosome, mediates 'Lys-63'-linked polyubiquitination of the U4 spliceosomal protein PRPF3. Ubiquitination of PRPF3 allows its recognition by the U5 component PRPF8 and stabilizes the U4/U5/U6 tri-snRNP spliceosomal complex. Recruited to RNA polymerase II C-terminal domain (CTD) and the pre-mRNA, it may also couple the transcriptional and spliceosomal machineries. The XAB2 complex, which contains PRPF19, is also involved in pre-mRNA splicing, transcription and transcription-coupled repair. Beside its role in pre-mRNA splicing PRPF19, as part of the PRP19-CDC5L complex, plays a role in the DNA damage response/DDR. It is recruited to the sites of DNA damage by the RPA complex where PRPF19 directly ubiquitinates RPA1 and RPA2. 'Lys-63'-linked polyubiquitination of the RPA complex allows the recruitment of the ATR-ATRIP complex and the activation of ATR, a master regulator of the DNA damage response. May also play a role in DNA double-strand break (DSB) repair by recruiting the repair factor SETMAR to altered DNA. As part of the PSO4 complex may also be involved in the DNA interstrand cross-links/ICLs repair process. In addition, may also mediate 'Lys-48'-linked polyubiquitination of substrates and play a role in proteasomal degradation. May play a role in the biogenesis of lipid droplets. May play a role in neural differentiation possibly through its function as part of the spliceosome. The polypeptide is Pre-mRNA-processing factor 19 (Homo sapiens (Human)).